A 272-amino-acid polypeptide reads, in one-letter code: Ethanolamine ammonia-lyase small subunit (272 aa).

Adenosylcob(III)alamin-binding residues include Val161, Glu182, and Cys211.

It belongs to the EutC family. As to quaternary structure, the basic unit is a heterodimer which dimerizes to form tetramers. The heterotetramers trimerize; 6 large subunits form a core ring with 6 small subunits projecting outwards. Adenosylcob(III)alamin is required as a cofactor.

Its subcellular location is the bacterial microcompartment. It catalyses the reaction ethanolamine = acetaldehyde + NH4(+). The protein operates within amine and polyamine degradation; ethanolamine degradation. Its function is as follows. Catalyzes the deamination of various vicinal amino-alcohols to oxo compounds. Allows this organism to utilize ethanolamine as the sole source of nitrogen and carbon in the presence of external vitamin B12. The polypeptide is Ethanolamine ammonia-lyase small subunit (Pseudomonas putida (strain W619)).